The primary structure comprises 426 residues: Squamosa promoter-binding-like protein 10 (426 aa).

Residues 178 to 255 (PPRCQAEGCK…AEHNRRRRKP (78 aa)) form an SBP-type zinc finger. Positions 181, 186, 203, 206, 222, 225, 229, and 241 each coordinate Zn(2+). The Bipartite nuclear localization signal motif lies at 238–254 (KRSCRKRLAEHNRRRRK). 2 stretches are compositionally biased toward low complexity: residues 268-287 (DAAA…AATS) and 401-417 (SDQN…NNNN). Disordered regions lie at residues 268-290 (DAAA…SYTG) and 392-426 (PSTA…VDFM).

As to expression, expressed in stems, leaf sheaths, and young panicles.

Its subcellular location is the nucleus. Functionally, trans-acting factor that binds specifically to the consensus nucleotide sequence 5'-TNCGTACAA-3'. The chain is Squamosa promoter-binding-like protein 10 (SPL10) from Oryza sativa subsp. indica (Rice).